The chain runs to 221 residues: Probable septum site-determining protein MinC (221 aa).

It belongs to the MinC family. Interacts with MinD and FtsZ.

Cell division inhibitor that blocks the formation of polar Z ring septums. Rapidly oscillates between the poles of the cell to destabilize FtsZ filaments that have formed before they mature into polar Z rings. Prevents FtsZ polymerization. The chain is Probable septum site-determining protein MinC from Shewanella frigidimarina (strain NCIMB 400).